Here is a 560-residue protein sequence, read N- to C-terminus: Thermosome subunit 1 (560 aa).

The tract at residues 525-550 (LSGGQTGSDDDDGGAPGGMGGGMGGM) is disordered. A compositionally biased stretch (gly residues) spans 538 to 550 (GAPGGMGGGMGGM).

This sequence belongs to the TCP-1 chaperonin family. The thermosome or CCT complex is a oligomeric complex of two octameric double-ring structures; the complex is probably a heterooligomer of CCT1, CCT2 and CCT3 with yet unknown stoichiometry.

In terms of biological role, molecular chaperone that assists in the folding or refolding of nascent or denatured proteins along with ATP hydrolysis. ATPase activity is highest in thermosome assemblies containing CCT1:CCT2, followed by assemblies containing CCT1:CCT2:CCT3. Required for thermosome ATPase activity. Not required for growth. The protein is Thermosome subunit 1 (cct1) of Haloferax volcanii (strain ATCC 29605 / DSM 3757 / JCM 8879 / NBRC 14742 / NCIMB 2012 / VKM B-1768 / DS2) (Halobacterium volcanii).